We begin with the raw amino-acid sequence, 311 residues long: GTP cyclohydrolase MptA (311 aa).

This sequence belongs to the GTP cyclohydrolase IV family. Homodimer. It depends on Fe(2+) as a cofactor.

The catalysed reaction is GTP + H2O = 7,8-dihydroneopterin 2',3'-cyclic phosphate + formate + diphosphate + H(+). It participates in cofactor biosynthesis; 5,6,7,8-tetrahydromethanopterin biosynthesis. Converts GTP to 7,8-dihydro-D-neopterin 2',3'-cyclic phosphate, the first intermediate in the biosynthesis of coenzyme methanopterin. The polypeptide is GTP cyclohydrolase MptA (Halobacterium salinarum (strain ATCC 29341 / DSM 671 / R1)).